The chain runs to 323 residues: Protein translocase subunit SecF (323 aa).

The next 6 membrane-spanning stretches (helical) occupy residues 19-39 (GVIV…FKGF), 138-158 (ILSL…RYEW), 162-182 (LASV…VIVF), 189-209 (EVIA…IIIF), 244-264 (LTVF…IIGF), and 269-289 (LIGT…VALL).

It belongs to the SecD/SecF family. SecF subfamily. In terms of assembly, forms a complex with SecD. Part of the essential Sec protein translocation apparatus which comprises SecA, SecYEG and auxiliary proteins SecDF-YajC and YidC.

Its subcellular location is the cell inner membrane. Part of the Sec protein translocase complex. Interacts with the SecYEG preprotein conducting channel. SecDF uses the proton motive force (PMF) to complete protein translocation after the ATP-dependent function of SecA. This is Protein translocase subunit SecF from Helicobacter pylori (strain ATCC 700392 / 26695) (Campylobacter pylori).